A 247-amino-acid polypeptide reads, in one-letter code: 5'-nucleotidase SurE (247 aa).

A divalent metal cation-binding residues include Asp-8, Asp-9, Ser-39, and Asn-91.

The protein belongs to the SurE nucleotidase family. A divalent metal cation is required as a cofactor.

It localises to the cytoplasm. It carries out the reaction a ribonucleoside 5'-phosphate + H2O = a ribonucleoside + phosphate. Nucleotidase that shows phosphatase activity on nucleoside 5'-monophosphates. This is 5'-nucleotidase SurE from Aromatoleum aromaticum (strain DSM 19018 / LMG 30748 / EbN1) (Azoarcus sp. (strain EbN1)).